A 123-amino-acid chain; its full sequence is Small ribosomal subunit protein uS11 (123 aa).

The protein belongs to the universal ribosomal protein uS11 family. In terms of assembly, part of the 30S ribosomal subunit. Interacts with proteins S7 and S18. Binds to IF-3.

Its function is as follows. Located on the platform of the 30S subunit, it bridges several disparate RNA helices of the 16S rRNA. Forms part of the Shine-Dalgarno cleft in the 70S ribosome. The sequence is that of Small ribosomal subunit protein uS11 from Coxiella burnetii (strain RSA 331 / Henzerling II).